The sequence spans 507 residues: Histidine ammonia-lyase (507 aa).

The 5-imidazolinone (Ala-Gly) cross-link spans 141-143 (ASG). A 2,3-didehydroalanine (Ser) modification is found at Ser142.

It belongs to the PAL/histidase family. Contains an active site 4-methylidene-imidazol-5-one (MIO), which is formed autocatalytically by cyclization and dehydration of residues Ala-Ser-Gly.

The protein localises to the cytoplasm. It catalyses the reaction L-histidine = trans-urocanate + NH4(+). It functions in the pathway amino-acid degradation; L-histidine degradation into L-glutamate; N-formimidoyl-L-glutamate from L-histidine: step 1/3. In Burkholderia ambifaria (strain ATCC BAA-244 / DSM 16087 / CCUG 44356 / LMG 19182 / AMMD) (Burkholderia cepacia (strain AMMD)), this protein is Histidine ammonia-lyase.